The chain runs to 636 residues: Threonine--tRNA ligase (636 aa).

The TGS domain maps to 1 to 63 (MSSISIALPD…KDDSRVEIIT (63 aa)). A catalytic region spans residues 243-534 (DHRRLGRELD…LIEHYAGNFP (292 aa)). Zn(2+) is bound by residues Cys-335, His-386, and His-511.

The protein belongs to the class-II aminoacyl-tRNA synthetase family. Homodimer. Zn(2+) is required as a cofactor.

It localises to the cytoplasm. The enzyme catalyses tRNA(Thr) + L-threonine + ATP = L-threonyl-tRNA(Thr) + AMP + diphosphate + H(+). Catalyzes the attachment of threonine to tRNA(Thr) in a two-step reaction: L-threonine is first activated by ATP to form Thr-AMP and then transferred to the acceptor end of tRNA(Thr). Also edits incorrectly charged L-seryl-tRNA(Thr). The chain is Threonine--tRNA ligase from Pelobacter propionicus (strain DSM 2379 / NBRC 103807 / OttBd1).